The sequence spans 363 residues: 5-hydroxytryptamine receptor 1E (363 aa).

Topologically, residues 1 to 21 (MNITNCTTEASMAIRPKTITE) are extracellular. N-linked (GlcNAc...) asparagine glycosylation is found at N2 and N5. A helical membrane pass occupies residues 22–45 (KMLICMTLVVITTLTTLLNLAVIM). Residues 46 to 59 (AIGTTKKLHQPANY) are Cytoplasmic-facing. The helical transmembrane segment at 60-84 (LICSLAVTDLLVAVLVMPLSIIYIV) threads the bilayer. The Extracellular segment spans residues 85–92 (MDRWKLGY). A helical membrane pass occupies residues 93–118 (FLCEVWLSVDMTCCTCSILHLCVIAL). C95 and C173 are disulfide-bonded. Serotonin-binding residues include D102 and C106. Residues 119 to 121 (DRY) carry the DRY motif; important for ligand-induced conformation changes motif. Topologically, residues 119-138 (DRYWAITNAIEYARKRTAKR) are cytoplasmic. A helical transmembrane segment spans residues 139 to 157 (AALMILTVWTISIFISMPP). Topologically, residues 158–179 (LFWRSHRRLSPPPSQCTIQHDH) are extracellular. A helical transmembrane segment spans residues 180–203 (VIYTIYSTLGAFYIPLTLILILYY). Topologically, residues 204 to 291 (RIYHAAKSLY…SSTRERKAAR (88 aa)) are cytoplasmic. The chain crosses the membrane as a helical span at residues 292–316 (ILGLILGAFILSWLPFFIKELIVGL). Over 317–322 (SIYTVS) the chain is Extracellular. Residues 323–345 (SEVADFLTWLGYVNSLINPLLYT) traverse the membrane as a helical segment. Positions 340–344 (NPLLY) match the NPxxY motif; important for ligand-induced conformation changes and signaling motif. Over 346 to 363 (SFNEDFKLAFKKLIRCRE) the chain is Cytoplasmic.

It belongs to the G-protein coupled receptor 1 family.

The protein localises to the cell membrane. Its function is as follows. G-protein coupled receptor for 5-hydroxytryptamine (serotonin). Also functions as a receptor for various alkaloids and psychoactive substances. Ligand binding causes a conformation change that triggers signaling via guanine nucleotide-binding proteins (G proteins) and modulates the activity of downstream effectors, such as adenylate cyclase. HTR1E is coupled to G(i)/G(o) G alpha proteins and mediates inhibitory neurotransmission by inhibiting adenylate cyclase activity. The protein is 5-hydroxytryptamine receptor 1E (HTR1E) of Pan troglodytes (Chimpanzee).